The sequence spans 650 residues: MLFILIFSVMESLPTELAYHVLSFIDFNSVVTYRLCSQESNNFIKSMLVFFPINFNNLVDQSTNYFEFVEKVDLQFCRQITDEFLSSFCRVKIINLRGCDKITDSGLKHLQHVKEINLAGCYQITNDGLLGLNNITFIDVSYCPKITFKGFANFNDDSVAVVQTRPLEYPKSKPYTLVDKKKINIRYYNNHPFLGKNNHAFQKDTNQSHSKNSISYLPRIIIAPKKIIDKIETERCRLFDSIYAVKPEFRDRVFMKNYEDLLPNTHLYDKQSALNRLYKKSNRRKFIDNLLSNKMDIMIGGSIGLFCTHKRCNFEPNDMDLYLKYIDSEKIRKIESIIYQSFIFRSIVVIRTSITITWLIQSTTDEITSIQLNIMNIKSWAEVFITYHADLTCIGYEILTNKFVYLDNRWNNILQNDTNYFSNILNMESANSIYKAASKYQQRGFTCVSLNDLCTDIQGNIAKSYDHHIYDSLVSLLSDKIYNKLNIHTSDTGYQNYYQKKYTNTNLIHYIFDKYRMSENISFASSVSHLQLPKIYPDIIMLSVYKINEILDTQQNNNTGTEFHQLSIHKQKNYINKTEKFFYSARSGAQYTGINHYNKLHTVCIVCKCGCDSFMTMNDFIGCQYEYSLDRGICSRIQCREYEYLELFLV.

The 47-residue stretch at 7–53 (FSVMESLPTELAYHVLSFIDFNSVVTYRLCSQESNNFIKSMLVFFPI) folds into the F-box domain.

The chain is Putative F-box protein R757 from Acanthamoeba polyphaga mimivirus (APMV).